The following is a 490-amino-acid chain: Sec sixty-one protein homolog (490 aa).

The Cytoplasmic segment spans residues 1–32 (MSGFRLIDIVKPILPILPEVELPFEKLPFDDK). The chain crosses the membrane as a helical span at residues 33-53 (IVYTIFAGLIYLFAQFPLVGL). The Lumenal portion of the chain corresponds to 54–121 (PKATTPNVND…DRELFQSLTK (68 aa)). A helical transmembrane segment spans residues 122 to 142 (VFAIVQYVILTNIFIFAGYFG). Over 143 to 146 (DDLS) the chain is Cytoplasmic. The chain crosses the membrane as a helical span at residues 147–167 (VVQIGLINFQLVGAGIFTTLL). Residues 168 to 174 (AEVIDKG) are Lumenal-facing. A helical transmembrane segment spans residues 175-195 (FGFSSGAMIINTVVIATNLVA). The Cytoplasmic segment spans residues 196–242 (DTFGVSQIKVGEDDQTEAQGALINLIQGLRSKHKTFIGGIISAFNRD). A helical membrane pass occupies residues 243–263 (YLPNLTTTIIVLAIAIIVCYL). Residues 264–293 (QSVRVELPIRSTRARGTNNVYPIKLLYTGC) lie on the Lumenal side of the membrane. A helical membrane pass occupies residues 294–314 (LSVLFSYTILFYIHIFAFVLI). Residues 315–339 (QLVAKNEPTHIICKIMGHYENANNL) lie on the Cytoplasmic side of the membrane. The helical transmembrane segment at 340–360 (LAVPTFPLSLLAPPTSFFKGV) threads the bilayer. Residue Thr361 is a topological domain, lumenal. The helical transmembrane segment at 362-382 (QQPLTFITYSAFILVTGIWFA) threads the bilayer. Over 383 to 421 (DKWQAISGSSARDVALEFKDQGITLMGRREQNVAKELNK) the chain is Cytoplasmic. Residues 422–442 (VIPIAAVTGASVLSLITVIGE) form a helical membrane-spanning segment. Residues 443–449 (SLGLKGK) are Lumenal-facing. Residues 450 to 470 (AAGIVVGIAGGFSLLEVITIE) traverse the membrane as a helical segment. The Cytoplasmic portion of the chain corresponds to 471 to 490 (YQQSGGQSALNQVLGVPGAM).

The protein belongs to the SecY/SEC61-alpha family. In terms of assembly, component of the heterotrimeric Ssh1 complex, which is composed of SSH1, SBH2 and SSS1.

It localises to the endoplasmic reticulum membrane. Part of the Ssh1 complex, which probably is the major component of a channel-forming translocon complex that may function exclusively in the cotranslational pathway of protein endoplasmic reticulum (ER) import. The chain is Sec sixty-one protein homolog (SSH1) from Saccharomyces cerevisiae (strain ATCC 204508 / S288c) (Baker's yeast).